Here is a 43-residue protein sequence, read N- to C-terminus: Potassium channel toxin gamma-KTx 4.6 (43 aa).

Cystine bridges form between Cys5/Cys23, Cys11/Cys34, Cys20/Cys39, and Cys24/Cys41.

The protein belongs to the ergtoxin family. Gamma-KTx 4 subfamily. In terms of tissue distribution, expressed by the venom gland.

It is found in the secreted. In terms of biological role, reversibly blocks Kv11/ERG potassium channels. The protein is Potassium channel toxin gamma-KTx 4.6 of Centruroides limpidus (Mexican scorpion).